The primary structure comprises 217 residues: Chorionic somatomammotropin hormone 1 (217 aa).

A signal peptide spans 1–26 (MAPGSRTSLLLAFALLCLPWLQEAGA). His44 lines the Zn(2+) pocket. A disulfide bridge links Cys79 with Cys191. Glu200 serves as a coordination point for Zn(2+). Cys208 and Cys215 are disulfide-bonded.

This sequence belongs to the somatotropin/prolactin family. Can be found in a monomeric as well as dimeric form.

It is found in the secreted. In terms of biological role, produced only during pregnancy and is involved in stimulating lactation, fetal growth and metabolism. Does not interact with GHR but only activates PRLR through zinc-induced dimerization. The protein is Chorionic somatomammotropin hormone 1 (CSH1) of Homo sapiens (Human).